The sequence spans 395 residues: MHC class I-like protein MILL1 (395 aa).

Residues 1-32 (MLLSRNLRALAAIHLWIVYLLLEDLLGTCAEG) form the signal peptide. Residues 57 to 148 (AVAEPHTLRY…ITAQNGQNTD (92 aa)) form an alpha-1 region. Asn98, Asn163, and Asn199 each carry an N-linked (GlcNAc...) asparagine glycan. Residues 149-240 (LHILQATFGC…SLRNGLLNTG (92 aa)) are alpha-2. Disulfide bonds link Cys158/Cys221 and Cys260/Cys317. Residues 241-337 (FPKVIVTFRN…EPAATEAPVY (97 aa)) form an alpha-3 region. Residues 242-333 (PKVIVTFRNY…HNINEPAATE (92 aa)) enclose the Ig-like C1-type domain. A disordered region spans residues 332 to 352 (TEAPVYGARREQPPTSGVGSR). The segment at 338–368 (GARREQPPTSGVGSRVGKSLWSAMTTALVVI) is connecting peptide. Residue Ser369 is the site of GPI-anchor amidated serine attachment. Positions 370–395 (WTLSQKLMGPLLWFCSGGFCSFLQCW) are cleaved as a propeptide — removed in mature form.

It belongs to the MHC class I family. As to quaternary structure, heterodimer with B2M. N-glycosylated. Expressed in stomach, intestine, uterus, skeletal muscle and heart.

The protein localises to the cell membrane. The sequence is that of MHC class I-like protein MILL1 from Mus musculus (Mouse).